Reading from the N-terminus, the 454-residue chain is GTPase Obg (454 aa).

The Obg domain occupies 2-159; sequence SDFVDEAVLH…VDIRLELKTI (158 aa). Residues 60–87 are disordered; sequence YQRRPHRKAENGAPGQGSNRSGASGADL. Residues 160–335 form the OBG-type G domain; the sequence is ADVGLVGFPS…LAYALGEQVA (176 aa). GTP is bound by residues 166-173, 191-195, 212-215, 287-290, and 316-318; these read GFPSAGKS, FTTLV, DVPG, NKID, and SAA. The Mg(2+) site is built by S173 and T193. An OCT domain is found at 353–435; it reads PREIGEIPFQ…DNPVVFDWDP (83 aa).

The protein belongs to the TRAFAC class OBG-HflX-like GTPase superfamily. OBG GTPase family. In terms of assembly, monomer. Mg(2+) is required as a cofactor.

The protein resides in the cytoplasm. Its function is as follows. An essential GTPase which binds GTP, GDP and possibly (p)ppGpp with moderate affinity, with high nucleotide exchange rates and a fairly low GTP hydrolysis rate. Plays a role in control of the cell cycle, stress response, ribosome biogenesis and in those bacteria that undergo differentiation, in morphogenesis control. This chain is GTPase Obg, found in Thermobifida fusca (strain YX).